The chain runs to 1434 residues: Ankyrin and armadillo repeat-containing protein (1434 aa).

A helical membrane pass occupies residues 309-329 (IRRGIGYLKLICFLIPFLLSL). 5 ANK repeats span residues 532-561 (AGYTIFHHAALHNRVSIICQLCNANFKVNQ), 569-598 (QGPTPLHLAAQACSLETTVCLLCSKADYTL), 602-631 (RGWMPIHFAAFYDNVCIIIALCRKDPSLLE), 638-667 (NQCTPLLLAATSGALDTIQYLFSIGANWRK), and 671-701 (KGNNIIHLSVLTFHTEVLKYIIKLNIPELPV). ARM repeat units lie at residues 732-771 (DQYWRCILDAGTIPALINLLKSSKIKLQCKTVGLLSNIST), 773-812 (KSAVHALVEAGGIPSLINLLVCDEPEVHSRCAVILYDIAQ), 814-852 (ENKDVIAKYNGIPSLINLLNLNIENVLVNVMNCIRVLCI), 855-894 (ENNQRAVREHKGLPYLIRFLSSDSDVLKAVSSAAIAEVGR), 897-936 (KEIQDAIAMEGAIPPLVALFKGKQISVQMKGAMAVESLAS), and 1072-1112 (PVSQ…CIVL).

Ubiquitously expressed with highest level in pancreas and lowest in skeletal muscle.

It is found in the membrane. The sequence is that of Ankyrin and armadillo repeat-containing protein (ANKAR) from Homo sapiens (Human).